A 254-amino-acid polypeptide reads, in one-letter code: Triosephosphate isomerase (254 aa).

12 to 14 is a substrate binding site; the sequence is NWK. Residue H99 is the Electrophile of the active site. The active-site Proton acceptor is E169. Residues G175, S214, and 235–236 contribute to the substrate site; that span reads GG.

Belongs to the triosephosphate isomerase family. In terms of assembly, homodimer.

It localises to the cytoplasm. It catalyses the reaction D-glyceraldehyde 3-phosphate = dihydroxyacetone phosphate. The protein operates within carbohydrate biosynthesis; gluconeogenesis. Its pathway is carbohydrate degradation; glycolysis; D-glyceraldehyde 3-phosphate from glycerone phosphate: step 1/1. Involved in the gluconeogenesis. Catalyzes stereospecifically the conversion of dihydroxyacetone phosphate (DHAP) to D-glyceraldehyde-3-phosphate (G3P). This is Triosephosphate isomerase from Chelativorans sp. (strain BNC1).